A 547-amino-acid chain; its full sequence is Chaperonin GroEL 1 (547 aa).

ATP contacts are provided by residues 30 to 33, Lys-51, 87 to 91, Gly-415, and Asp-496; these read TLGP and DGTTT.

Belongs to the chaperonin (HSP60) family. As to quaternary structure, forms a cylinder of 14 subunits composed of two heptameric rings stacked back-to-back. Interacts with the co-chaperonin GroES.

The protein localises to the cytoplasm. The enzyme catalyses ATP + H2O + a folded polypeptide = ADP + phosphate + an unfolded polypeptide.. Together with its co-chaperonin GroES, plays an essential role in assisting protein folding. The GroEL-GroES system forms a nano-cage that allows encapsulation of the non-native substrate proteins and provides a physical environment optimized to promote and accelerate protein folding. The protein is Chaperonin GroEL 1 of Rhodopseudomonas palustris (strain ATCC BAA-98 / CGA009).